A 337-amino-acid chain; its full sequence is MKFVDSATISIQAGDGGRGCVSFRREKFVPKGGPDGGDGGRGGHIYLRANKQLATLLDFRYRKQYLATRGAHGQGSRKTGKDGSDIVIEIPCGTLVKNAQTHELIADLTEDGQEMLVARGGKGGRGNQHFATPTRQAPRYAEPGLKGEAFELEMELKLMADVGLVGFPNAGKSTLISVLSAAKPKIADYPFTTLVPNLGIVRYEEYKSFVMADIPGIIEGAAEGKGLGLQFLRHIERTKILVVLVAADAADIALEYQTLVQELEKFDSGLLLKPRIAVITKMDIASEDMVVPELEGVKLLMISSVTGKGLKELKDELWRQVSTCSRSEDQPLDEHLG.

The Obg domain maps to methionine 1–methionine 159. Residues alanine 160–serine 322 form the OBG-type G domain. GTP-binding positions include glycine 166 to serine 173, phenylalanine 191 to valine 195, aspartate 213 to glycine 216, threonine 280 to aspartate 283, and serine 303 to valine 305. Residues serine 173 and threonine 193 each contribute to the Mg(2+) site.

It belongs to the TRAFAC class OBG-HflX-like GTPase superfamily. OBG GTPase family. In terms of assembly, monomer. Requires Mg(2+) as cofactor.

It localises to the cytoplasm. Its function is as follows. An essential GTPase which binds GTP, GDP and possibly (p)ppGpp with moderate affinity, with high nucleotide exchange rates and a fairly low GTP hydrolysis rate. Plays a role in control of the cell cycle, stress response, ribosome biogenesis and in those bacteria that undergo differentiation, in morphogenesis control. This is GTPase Obg from Chlorobium phaeobacteroides (strain DSM 266 / SMG 266 / 2430).